The sequence spans 319 residues: Olfactory receptor 5B21 (319 aa).

At 1-26 (MTSMENITEVTEFILLGLTDDPNLQV) the chain is on the extracellular side. N-linked (GlcNAc...) asparagine glycosylation is present at asparagine 6. The chain crosses the membrane as a helical span at residues 27-47 (PLLLIFLFIYLVTLIGNGGMM). Residues 48–55 (VIIFSDSH) lie on the Cytoplasmic side of the membrane. The chain crosses the membrane as a helical span at residues 56-76 (LHTPMYFFLSNLSFVDLGYSS). Residues 77 to 100 (AVAPKMVAALQSGNKVISYNGCAA) lie on the Extracellular side of the membrane. A disulfide bond links cysteine 98 and cysteine 190. The chain crosses the membrane as a helical span at residues 101–121 (QFFFFVGFATVECYLLASMAY). At 122–134 (DRHAAVCRPLHYT) the chain is on the cytoplasmic side. Residues 135–155 (TTMTTGVCTILTIGSYTCGFL) form a helical membrane-spanning segment. At 156–197 (NASIHAADTFKLSFCGSNKINHFFCDIPPLLALACSSTHISK) the chain is on the extracellular side. Residues 198 to 218 (LVVFFVVGFNVFFTLLVIIIS) form a helical membrane-spanning segment. Topologically, residues 219–238 (YFFIYIAIQNMKSSEGRKKA) are cytoplasmic. Residues 239-259 (FSTCASHLTAVSIFYGTIIFM) traverse the membrane as a helical segment. At 260-272 (YLQPSSGQSMDTD) the chain is on the extracellular side. A helical transmembrane segment spans residues 273 to 293 (KIASVFYTVVIPMLNPLIYSL). At 294–319 (RNREVKSALWKILNRFYPASFSVSRK) the chain is on the cytoplasmic side.

It belongs to the G-protein coupled receptor 1 family.

The protein localises to the cell membrane. In terms of biological role, odorant receptor. This chain is Olfactory receptor 5B21, found in Mus musculus (Mouse).